A 315-amino-acid chain; its full sequence is Glycine--tRNA ligase alpha subunit (315 aa).

It belongs to the class-II aminoacyl-tRNA synthetase family. Tetramer of two alpha and two beta subunits.

Its subcellular location is the cytoplasm. It catalyses the reaction tRNA(Gly) + glycine + ATP = glycyl-tRNA(Gly) + AMP + diphosphate. The chain is Glycine--tRNA ligase alpha subunit from Pseudomonas aeruginosa (strain LESB58).